Here is a 359-residue protein sequence, read N- to C-terminus: GTP 3',8-cyclase 1 (359 aa).

A Radical SAM core domain is found at 21–241; that stretch reads RCRRMMGDLR…SLEKRYGRIE (221 aa). R30 provides a ligand contact to GTP. C37 and C41 together coordinate [4Fe-4S] cluster. Y43 provides a ligand contact to S-adenosyl-L-methionine. C44 is a binding site for [4Fe-4S] cluster. R80 contributes to the GTP binding site. S-adenosyl-L-methionine is bound at residue G84. T115 is a GTP binding site. S139 serves as a coordination point for S-adenosyl-L-methionine. K176 provides a ligand contact to GTP. M210 serves as a coordination point for S-adenosyl-L-methionine. [4Fe-4S] cluster contacts are provided by C273 and C276. Position 278 to 280 (278 to 280) interacts with GTP; it reads RSR. Residue C290 coordinates [4Fe-4S] cluster.

This sequence belongs to the radical SAM superfamily. MoaA family. As to quaternary structure, monomer and homodimer. [4Fe-4S] cluster is required as a cofactor.

It carries out the reaction GTP + AH2 + S-adenosyl-L-methionine = (8S)-3',8-cyclo-7,8-dihydroguanosine 5'-triphosphate + 5'-deoxyadenosine + L-methionine + A + H(+). It functions in the pathway cofactor biosynthesis; molybdopterin biosynthesis. Its function is as follows. Catalyzes the cyclization of GTP to (8S)-3',8-cyclo-7,8-dihydroguanosine 5'-triphosphate. The sequence is that of GTP 3',8-cyclase 1 from Mycobacterium tuberculosis (strain CDC 1551 / Oshkosh).